Reading from the N-terminus, the 410-residue chain is Platelet-activating factor acetylhydrolase IB subunit beta (410 aa).

Residues 1-38 (MVLSQRQRDELNRAIADYLRSNGYEEAYSVFKKEAELD) are required for self-association and interaction with PAFAH1B2 and PAFAH1B3. The interval 1 to 66 (MVLSQRQRDE…SVIRLQKKVM (66 aa)) is interaction with NDE1. An interaction with NDEL1 region spans residues 1 to 102 (MVLSQRQRDE…EWIPRPPEKY (102 aa)). The region spanning 7–39 (QRDELNRAIADYLRSNGYEEAYSVFKKEAELDV) is the LisH domain. Lys53 is subject to N6-acetyllysine. The stretch at 56–82 (TSVIRLQKKVMELESKLNEAKEEFTSG) forms a coiled coil. The segment at 83 to 410 (GPLGQKRDPK…DQTVKVWECR (328 aa)) is interaction with dynein and dynactin. WD repeat units lie at residues 106–147 (GHRS…RTLK), 148–187 (GHTDSVQDISFDHSGKLLASCSADMTIKLWDFQGFECIRT), 190–229 (GHDHNVSSVAIMPNGDHIVSASRDKTIKMWEVQTGYCVKT), 232–271 (GHREWVRMVRPNQDGTLIASCSNDQTVRVWVVATKECKAE), 274–333 (EHEH…CLMT), 336–377 (GHDN…KTLN), and 378–410 (AHEHFVTSLDFHKTAPYVVTGSVDQTVKVWECR). Phosphoserine is present on Ser109. The interaction with DCX stretch occupies residues 367 to 409 (YKNKRCMKTLNAHEHFVTSLDFHKTAPYVVTGSVDQTVKVWEC). The segment at 388–410 (FHKTAPYVVTGSVDQTVKVWECR) is interaction with NDEL1.

The protein belongs to the WD repeat LIS1/nudF family. As to quaternary structure, component of the cytosolic PAF-AH (I) heterotetrameric enzyme, which is composed of PAFAH1B1 (beta), PAFAH1B2 (alpha2) and PAFAH1B3 (alpha1) subunits. The catalytic activity of the enzyme resides in the alpha1 (PAFAH1B3) and alpha2 (PAFAH1B2) subunits, whereas the beta subunit (PAFAH1B1) has regulatory activity. Trimer formation is not essential for the catalytic activity. Interacts with the catalytic dimer of PAF-AH (I) heterotetrameric enzyme: interacts with PAFAH1B2 homodimer (alpha2/alpha2 homodimer), PAFAH1B3 homodimer (alpha1/alpha1 homodimer) and PAFAH1B2-PAFAH1B3 heterodimer (alpha2/alpha1 heterodimer). Interacts with IQGAP1, KATNB1 and NUDC. Interacts with DAB1 when DAB1 is phosphorylated in response to RELN/reelin signaling. Can self-associate. Interacts with DCX, dynein, dynactin, NDE1, NDEL1 and RSN. Interacts with DISC1, and this interaction is enhanced by NDEL1. Interacts with INTS13. Interacts with DCDC1. Fairly ubiquitous expression in both the frontal and occipital areas of the brain.

It localises to the cytoplasm. It is found in the cytoskeleton. The protein resides in the microtubule organizing center. Its subcellular location is the centrosome. The protein localises to the spindle. It localises to the nucleus membrane. In terms of biological role, regulatory subunit (beta subunit) of the cytosolic type I platelet-activating factor (PAF) acetylhydrolase (PAF-AH (I)), an enzyme that catalyzes the hydrolyze of the acetyl group at the sn-2 position of PAF and its analogs and participates in PAF inactivation. Regulates the PAF-AH (I) activity in a catalytic dimer composition-dependent manner. Required for proper activation of Rho GTPases and actin polymerization at the leading edge of locomoting cerebellar neurons and postmigratory hippocampal neurons in response to calcium influx triggered via NMDA receptors. Positively regulates the activity of the minus-end directed microtubule motor protein dynein. May enhance dynein-mediated microtubule sliding by targeting dynein to the microtubule plus end. Required for several dynein- and microtubule-dependent processes such as the maintenance of Golgi integrity, the peripheral transport of microtubule fragments and the coupling of the nucleus and centrosome. Required during brain development for the proliferation of neuronal precursors and the migration of newly formed neurons from the ventricular/subventricular zone toward the cortical plate. Neuronal migration involves a process called nucleokinesis, whereby migrating cells extend an anterior process into which the nucleus subsequently translocates. During nucleokinesis dynein at the nuclear surface may translocate the nucleus towards the centrosome by exerting force on centrosomal microtubules. May also play a role in other forms of cell locomotion including the migration of fibroblasts during wound healing. Required for dynein recruitment to microtubule plus ends and BICD2-bound cargos. May modulate the Reelin pathway through interaction of the PAF-AH (I) catalytic dimer with VLDLR. The sequence is that of Platelet-activating factor acetylhydrolase IB subunit beta from Homo sapiens (Human).